The sequence spans 216 residues: Uracil-DNA glycosylase (216 aa).

Asp-60 functions as the Proton acceptor in the catalytic mechanism.

It belongs to the uracil-DNA glycosylase (UDG) superfamily. UNG family.

It localises to the cytoplasm. It catalyses the reaction Hydrolyzes single-stranded DNA or mismatched double-stranded DNA and polynucleotides, releasing free uracil.. Functionally, excises uracil residues from the DNA which can arise as a result of misincorporation of dUMP residues by DNA polymerase or due to deamination of cytosine. The protein is Uracil-DNA glycosylase of Psychromonas ingrahamii (strain DSM 17664 / CCUG 51855 / 37).